The sequence spans 1744 residues: DNA-directed RNA polymerase I subunit RPA1 (1744 aa).

Residues cysteine 56, cysteine 69, and histidine 72 each contribute to the Zn(2+) site. Mg(2+) contacts are provided by aspartate 597, aspartate 599, and aspartate 601. A bridging helix region spans residues proline 953–aspartate 965. The segment at valine 1333–serine 1484 is disordered. Gly residues-rich tracts occupy residues aspartate 1341–glycine 1354 and aspartate 1366–phenylalanine 1376. The span at arginine 1464–threonine 1478 shows a compositional bias: basic and acidic residues.

Belongs to the RNA polymerase beta' chain family. In terms of assembly, component of the RNA polymerase I (Pol I) complex consisting of at least 13 subunits. Phosphorylated.

The protein resides in the nucleus. It localises to the nucleolus. The enzyme catalyses RNA(n) + a ribonucleoside 5'-triphosphate = RNA(n+1) + diphosphate. Functionally, DNA-dependent RNA polymerase catalyzes the transcription of DNA into RNA using the four ribonucleoside triphosphates as substrates. Largest and catalytic core component of RNA polymerase I which synthesizes ribosomal RNA precursors. Forms the polymerase active center together with the second largest subunit. A single stranded DNA template strand of the promoter is positioned within the central active site cleft of Pol I. A bridging helix emanates from RPA1 and crosses the cleft near the catalytic site and is thought to promote translocation of Pol I by acting as a ratchet that moves the RNA-DNA hybrid through the active site by switching from straight to bent conformations at each step of nucleotide addition. The sequence is that of DNA-directed RNA polymerase I subunit RPA1 (TRP11) from Trypanosoma brucei brucei.